The primary structure comprises 338 residues: Ketol-acid reductoisomerase (NADP(+)) (338 aa).

Positions 1–181 constitute a KARI N-terminal Rossmann domain; the sequence is MKVFYDKDCD…GGGRAGIIET (181 aa). NADP(+) contacts are provided by residues 24 to 27, Arg47, and Ser52; that span reads YGSQ. The active site involves His107. Gly133 contributes to the NADP(+) binding site. The region spanning 182 to 327 is the KARI C-terminal knotted domain; that stretch reads NFREETETDL…GKLRAMMPWI (146 aa). Mg(2+) contacts are provided by Asp190, Glu194, Glu226, and Glu230. Residue Ser251 participates in substrate binding.

Belongs to the ketol-acid reductoisomerase family. Requires Mg(2+) as cofactor.

The enzyme catalyses (2R)-2,3-dihydroxy-3-methylbutanoate + NADP(+) = (2S)-2-acetolactate + NADPH + H(+). It catalyses the reaction (2R,3R)-2,3-dihydroxy-3-methylpentanoate + NADP(+) = (S)-2-ethyl-2-hydroxy-3-oxobutanoate + NADPH + H(+). The protein operates within amino-acid biosynthesis; L-isoleucine biosynthesis; L-isoleucine from 2-oxobutanoate: step 2/4. Its pathway is amino-acid biosynthesis; L-valine biosynthesis; L-valine from pyruvate: step 2/4. Its function is as follows. Involved in the biosynthesis of branched-chain amino acids (BCAA). Catalyzes an alkyl-migration followed by a ketol-acid reduction of (S)-2-acetolactate (S2AL) to yield (R)-2,3-dihydroxy-isovalerate. In the isomerase reaction, S2AL is rearranged via a Mg-dependent methyl migration to produce 3-hydroxy-3-methyl-2-ketobutyrate (HMKB). In the reductase reaction, this 2-ketoacid undergoes a metal-dependent reduction by NADPH to yield (R)-2,3-dihydroxy-isovalerate. This is Ketol-acid reductoisomerase (NADP(+)) from Bordetella bronchiseptica (strain ATCC BAA-588 / NCTC 13252 / RB50) (Alcaligenes bronchisepticus).